The following is a 116-amino-acid chain: Large ribosomal subunit protein bL17 (116 aa).

Belongs to the bacterial ribosomal protein bL17 family. Part of the 50S ribosomal subunit. Contacts protein L32.

The chain is Large ribosomal subunit protein bL17 from Prochlorococcus marinus (strain MIT 9303).